Reading from the N-terminus, the 186-residue chain is TATA-box-binding protein E (186 aa).

2 repeat units span residues 10 to 86 and 101 to 179.

The protein belongs to the TBP family.

Its function is as follows. General factor that plays a role in the activation of archaeal genes transcribed by RNA polymerase. Binds specifically to the TATA box promoter element which lies close to the position of transcription initiation. This chain is TATA-box-binding protein E (tbpE), found in Halobacterium salinarum (strain ATCC 700922 / JCM 11081 / NRC-1) (Halobacterium halobium).